A 552-amino-acid polypeptide reads, in one-letter code: MRVSLRFTILAVSAMIFFPVIVFIYVVEAHTSPKVIADDQERSYGVICDAGSTGTRLFVYNWISTSDSELIQIEPVIYDNKPVMKKISPGLSTFGTKPAQAAEYLRPLMELAERHIPEEKRPYTPVFIFATAGMRLIPDEQKEAVLKNLRNKLPKITSMQVLKEHIRIIEGKWEGIYSWIAVNYALGKFNKTATLDFPGTSPAHARQKTVGMIDMGGASAQIAFELPDTDSFSSINVENINLGCREDDSLFKYKLFVTTFLGYGVNEGIRKYEHMLLSKLKDQNGTVIQDDCMPLNLHKTVTLENGENFVRRGTGNWNTCSNEVKKLLNPESSSEVCKAEAAKCYFGAVPAPSIPLSNIEMYGFSEYWYSTHDVLGLGGQYDAENIAKKTQQYCSKRWSTIQAESKKQLYPRADEERLRTQCFKSAWITSVLHDGFSVDKTHNKFQSVSTIAGQEVQWALGAMIYHMRFFPLRDSSRNLIVKETHSSSESLWAPLFFLSAVFCLFVLVCAKEQSVLCFDDKRRSSFGMSRSQYSYKMLKENRTSSSFLENFA.

The Cytoplasmic segment spans residues 1 to 6 (MRVSLR). A helical membrane pass occupies residues 7–27 (FTILAVSAMIFFPVIVFIYVV). Topologically, residues 28 to 489 (EAHTSPKVIA…IVKETHSSSE (462 aa)) are lumenal. The active-site Proton acceptor is the Glu174. N-linked (GlcNAc...) asparagine glycosylation is found at Asn190 and Asn284. Residues 490 to 510 (SLWAPLFFLSAVFCLFVLVCA) form a helical membrane-spanning segment. Over 511–552 (KEQSVLCFDDKRRSSFGMSRSQYSYKMLKENRTSSSFLENFA) the chain is Cytoplasmic.

The protein belongs to the GDA1/CD39 NTPase family. In terms of tissue distribution, expressed in body wall muscles.

Its subcellular location is the golgi apparatus membrane. It catalyses the reaction a ribonucleoside 5'-diphosphate + H2O = a ribonucleoside 5'-phosphate + phosphate + H(+). Seems to be able to hydrolyze ADP, UDP and GDP. Supports mig-17 glycosylation and surface expression, which is required for proper migration of distal tip cells during gonad morphogenesis. The polypeptide is Nucleoside-diphosphatase mig-23 (mig-23) (Caenorhabditis elegans).